We begin with the raw amino-acid sequence, 123 residues long: uncharacterized protein (123 aa).

Positions 89 to 123 (GVGGRKLGSEGQSLSENSEQRSLMRWGCGGSSERR) are disordered. Residues 98–109 (EGQSLSENSEQR) show a composition bias toward polar residues.

This is an uncharacterized protein from Encephalitozoon cuniculi (strain GB-M1) (Microsporidian parasite).